The sequence spans 1306 residues: DNA-directed RNA polymerase subunit beta' (1306 aa).

Residues Cys214, Cys285, Cys292, and Cys295 each contribute to the Zn(2+) site. Disordered stretches follow at residues 1234–1263 and 1281–1306; these read LDNGEDSLNNRYGQGERDNNNSDKKPPNRL and IARAYTEADPPWSVESKQEKDDDDDK. Over residues 1247 to 1259 the composition is skewed to basic and acidic residues; sequence QGERDNNNSDKKP.

The protein belongs to the RNA polymerase beta' chain family. RpoC2 subfamily. As to quaternary structure, in cyanobacteria the RNAP catalytic core is composed of 2 alpha, 1 beta, 1 beta', 1 gamma and 1 omega subunit. When a sigma factor is associated with the core the holoenzyme is formed, which can initiate transcription. Zn(2+) serves as cofactor.

It carries out the reaction RNA(n) + a ribonucleoside 5'-triphosphate = RNA(n+1) + diphosphate. In terms of biological role, DNA-dependent RNA polymerase catalyzes the transcription of DNA into RNA using the four ribonucleoside triphosphates as substrates. The polypeptide is DNA-directed RNA polymerase subunit beta' (Crocosphaera subtropica (strain ATCC 51142 / BH68) (Cyanothece sp. (strain ATCC 51142))).